Here is a 1095-residue protein sequence, read N- to C-terminus: DNA-directed RNA polymerase subunit beta'' (1095 aa).

Zn(2+) is bound by residues cysteine 220, cysteine 293, cysteine 300, and cysteine 303.

Belongs to the RNA polymerase beta' chain family. RpoC2 subfamily. In terms of assembly, in plastids the minimal PEP RNA polymerase catalytic core is composed of four subunits: alpha, beta, beta', and beta''. When a (nuclear-encoded) sigma factor is associated with the core the holoenzyme is formed, which can initiate transcription. Requires Zn(2+) as cofactor.

It is found in the plastid. Its subcellular location is the chloroplast. The enzyme catalyses RNA(n) + a ribonucleoside 5'-triphosphate = RNA(n+1) + diphosphate. Its function is as follows. DNA-dependent RNA polymerase catalyzes the transcription of DNA into RNA using the four ribonucleoside triphosphates as substrates. In Zygnema circumcarinatum (Green alga), this protein is DNA-directed RNA polymerase subunit beta''.